The sequence spans 274 residues: Large ribosomal subunit protein uL2 (274 aa).

The tract at residues 221–274 (RGTAMNPVDHPHGGGEGKNFGKHPVTPWGVQTKGKKTRSNKRTDKFIVRRRSKK) is disordered.

Belongs to the universal ribosomal protein uL2 family. Part of the 50S ribosomal subunit. Forms a bridge to the 30S subunit in the 70S ribosome.

Functionally, one of the primary rRNA binding proteins. Required for association of the 30S and 50S subunits to form the 70S ribosome, for tRNA binding and peptide bond formation. It has been suggested to have peptidyltransferase activity; this is somewhat controversial. Makes several contacts with the 16S rRNA in the 70S ribosome. In Serratia proteamaculans (strain 568), this protein is Large ribosomal subunit protein uL2.